A 194-amino-acid polypeptide reads, in one-letter code: MPKIGMEPLRRRELIDAAIRTIGQRGSLDVTVAQIAHEAGVSPALAHHYFGGKDKLILATMRHLLRELGQDLNAAIGRTETPRERIAAIIAVNFSASQFAQETIAAWLTFYVHAQQSEDTRRLLRIYARRLHSNLVFALEQLTSRERASRIAEGAGAMIDGLYIRHALGADAPNAASAIALVEDYIAVQLMGEK.

The HTH tetR-type domain occupies 8–68 (PLRRRELIDA…ATMRHLLREL (61 aa)). Residues 31-50 (TVAQIAHEAGVSPALAHHYF) constitute a DNA-binding region (H-T-H motif).

Its pathway is amine and polyamine biosynthesis; betaine biosynthesis via choline pathway [regulation]. Its function is as follows. Repressor involved in the biosynthesis of the osmoprotectant glycine betaine. It represses transcription of the choline transporter BetT and the genes of BetAB involved in the synthesis of glycine betaine. The polypeptide is HTH-type transcriptional regulator BetI (Brucella anthropi (strain ATCC 49188 / DSM 6882 / CCUG 24695 / JCM 21032 / LMG 3331 / NBRC 15819 / NCTC 12168 / Alc 37) (Ochrobactrum anthropi)).